The primary structure comprises 89 residues: Signal recognition particle 19 kDa protein (89 aa).

It belongs to the SRP19 family. In terms of assembly, part of the signal recognition particle protein translocation system, which is composed of SRP and FtsY. Archaeal SRP consists of a 7S RNA molecule of 300 nucleotides and two protein subunits: SRP54 and SRP19.

It is found in the cytoplasm. Functionally, involved in targeting and insertion of nascent membrane proteins into the cytoplasmic membrane. Binds directly to 7S RNA and mediates binding of the 54 kDa subunit of the SRP. The polypeptide is Signal recognition particle 19 kDa protein (Methanococcus maripaludis (strain DSM 14266 / JCM 13030 / NBRC 101832 / S2 / LL)).